Here is a 160-residue protein sequence, read N- to C-terminus: Protein cornichon homolog 3 (160 aa).

Residues Met-1–Tyr-10 are Cytoplasmic-facing. Residues Met-11 to Phe-31 form a helical membrane-spanning segment. Residues Asp-32–Tyr-72 lie on the Lumenal side of the membrane. The helical transmembrane segment at Ser-73–Leu-93 threads the bilayer. Over Asn-94–Lys-138 the chain is Cytoplasmic. A helical transmembrane segment spans residues Leu-139–Ser-159. A topological domain (lumenal) is located at residue Ser-160.

This sequence belongs to the cornichon family. As to quaternary structure, acts as an auxiliary subunit for AMPA-selective glutamate receptors (AMPARs). Found in a complex with GRIA1, GRIA2, GRIA3, GRIA4, CNIH2, CACNG2, CACNG3, CACNG4, CACNG5, CACNG7 and CACNG8. Brain. Expressed in the neocortex, hippocampal formation, and cerebellum (at protein level).

The protein resides in the postsynaptic cell membrane. In terms of biological role, regulates the trafficking and gating properties of AMPA-selective glutamate receptors (AMPARs). Promotes their targeting to the cell membrane and synapses and modulates their gating properties by regulating their rates of activation, deactivation and desensitization. The chain is Protein cornichon homolog 3 (Cnih3) from Rattus norvegicus (Rat).